Reading from the N-terminus, the 141-residue chain is Vesicle-associated membrane protein 4 (141 aa).

The tract at residues 1–51 (MPPKFKRHLNDDDVTGSVKSERRNLLEDDSDEEEDFFLRGPSGPRFGPRND) is disordered. Topologically, residues 1-115 (MPPKFKRHLN…RRQMWWRGCK (115 aa)) are cytoplasmic. 2 positions are modified to phosphoserine: serine 17 and serine 30. Positions 52–112 (KIKHVQNQVD…KQLRRQMWWR (61 aa)) constitute a v-SNARE coiled-coil homology domain. Residues 116 to 136 (IKAIMALVAVILLLVIIILIV) traverse the membrane as a helical; Anchor for type IV membrane protein segment. Residues 137–141 (VKYRT) lie on the Vesicular side of the membrane.

The protein belongs to the synaptobrevin family. As to quaternary structure, identified in a complex containing STX6, STX12, VAMP4 and VTI1A. Interacts with BAIAP3; this interaction is increased in the presence of calcium.

It is found in the golgi apparatus. The protein resides in the trans-Golgi network membrane. Functionally, involved in the pathway that functions to remove an inhibitor (probably synaptotagmin-4) of calcium-triggered exocytosis during the maturation of secretory granules. May be a marker for this sorting pathway that is critical for remodeling the secretory response of granule. The sequence is that of Vesicle-associated membrane protein 4 (VAMP4) from Bos taurus (Bovine).